Here is a 259-residue protein sequence, read N- to C-terminus: Deoxyribose-phosphate aldolase (259 aa).

D102 acts as the Proton donor/acceptor in catalysis. K167 functions as the Schiff-base intermediate with acetaldehyde in the catalytic mechanism. K201 functions as the Proton donor/acceptor in the catalytic mechanism.

This sequence belongs to the DeoC/FbaB aldolase family. DeoC type 2 subfamily.

The protein resides in the cytoplasm. The catalysed reaction is 2-deoxy-D-ribose 5-phosphate = D-glyceraldehyde 3-phosphate + acetaldehyde. It functions in the pathway carbohydrate degradation; 2-deoxy-D-ribose 1-phosphate degradation; D-glyceraldehyde 3-phosphate and acetaldehyde from 2-deoxy-alpha-D-ribose 1-phosphate: step 2/2. In terms of biological role, catalyzes a reversible aldol reaction between acetaldehyde and D-glyceraldehyde 3-phosphate to generate 2-deoxy-D-ribose 5-phosphate. The polypeptide is Deoxyribose-phosphate aldolase (Escherichia coli O8 (strain IAI1)).